A 139-amino-acid chain; its full sequence is ATP synthase epsilon chain (139 aa).

The protein belongs to the ATPase epsilon chain family. F-type ATPases have 2 components, CF(1) - the catalytic core - and CF(0) - the membrane proton channel. CF(1) has five subunits: alpha(3), beta(3), gamma(1), delta(1), epsilon(1). CF(0) has three main subunits: a, b and c.

Its subcellular location is the cell inner membrane. Its function is as follows. Produces ATP from ADP in the presence of a proton gradient across the membrane. The sequence is that of ATP synthase epsilon chain from Erwinia tasmaniensis (strain DSM 17950 / CFBP 7177 / CIP 109463 / NCPPB 4357 / Et1/99).